The following is a 204-amino-acid chain: Large ribosomal subunit protein uL22c (204 aa).

It belongs to the universal ribosomal protein uL22 family. As to quaternary structure, part of the 50S ribosomal subunit.

Its subcellular location is the plastid. It is found in the chloroplast. In terms of biological role, this protein binds specifically to 23S rRNA. The globular domain of the protein is located near the polypeptide exit tunnel on the outside of the subunit, while an extended beta-hairpin is found that lines the wall of the exit tunnel in the center of the 70S ribosome. This is Large ribosomal subunit protein uL22c (rpl22) from Pisum sativum (Garden pea).